The primary structure comprises 117 residues: G antigen 12B/C/D/E (117 aa).

Positions 1–117 are disordered; sequence MSWRGRSTYY…PEEGEKQSQC (117 aa). 2 stretches are compositionally biased toward acidic residues: residues 32–45 and 87–96; these read FSDE…EEGE and ECEDGPDGQE. Residues 103 to 117 show a composition bias toward basic and acidic residues; the sequence is EEVKTPEEGEKQSQC.

This sequence belongs to the GAGE family.

In Homo sapiens (Human), this protein is G antigen 12B/C/D/E (GAGE12B).